The chain runs to 1314 residues: MASKGTGMSFSRKSYRLTSDAEKSRVTGIVQEKLLSDYLYRIFSPPDRGPAAATSRKPLNFHNLPEHVDQLLQVDSEDNESQGQVEGRLGPSTVVLDHTGGFEGLLLVDDDLLGVIGHSNFGTIRSTTCVYKGKWVYEVLISSQGLMQIGWCTINCRFNQEEGVGDTHNSYAYDGNRVRKWNVTTTNYGKAWAAGDIVSCLIDLDDGTLSFCLNGVSLGTAFENLSRGLGMAYFPAISLSFKESVAFNFGSRPLRYPVAGFRPLQDPPFADLVRAQRLLGCFQAVLSVELDPVEGRLVETESSEWQLQGQPTVLLTLAHIFHHFAPLLRKVYLVEAVLMSFLLGVVEKGTPEQAQSVVHQILDLLWLFMEDYEVQDCLKQLMMSLLRLYRFSPIVPDLGLQIHYLRLTMSILRHEKSRKFLLSNVLFDMLRSVVFFYIKSPLRVEEAGLKELIPTTWWPHRSSRESRDGKEAREETTEERQRRRAYERGCQRLKKRIEVVEELQVQILKLLLDNKDDNGGEASRYIFLTKFRKFLQENASGRGNTPVLCPPEYMVCFLHRLVSALRFYWDEYKASNPRASFSEEAYIPPQIFYNGKVDYFDLQRLGGLLSHLRKTLKDDLASKANIVIDPLELQAATMDDLDEDEEPAPSAAQRPMQALAIGGALPLPRPGWLSSPTLGRANRFLSTAAVSLMTPRRLLSTMEKVKVRSLNVEQRTREDIEGSHWNEGLLLGRPPEEPEQPLTENSLLEVLDGTVMMYNLSVHQQLGKMVGVSDDVNEYAMALRDTEDKLRRCPKRRKDILAELTKSQKVFSEKLDHLSRRLAWVHATVYSQEKMLDIYWLLRVCLRTIEHGDRTGSLFAFMPEFYLSVAINSYSALKNYFGPVHSMEELPGYEETLTRLAAILAKHFADPRIVGTDIRDSLMQALASYVCYPHSLRAVERIPEEQRIAMVRNLLAPYEQRPWAQTNWILVRLWRGCGFGYRYTRLPHLLKTKPEDANLPSLQKPCPSTLLQQHMADLLRQGSDVAPSFLNSVLNQLNWAFSEFIGMIQEIQQAAERLERNFVDSRQLKVCATCFDLSVSLLRVLEMTITLVPEIFLDWSRPTSEMLLRRLAQLLNQVLNRVTAERNLFDRVVTLRLPGLESVDHYPILVAVTGILVRLLVHGPTSETEQATSVLLADPCFQLRSICYLLGQPEPLAPGTTLPAPDRKRFSLQSYTDYISAEELAQVEQMLAHLTAASAQAAAASLPTNEEDLCPICYAHPISAVFQPCGHKSCKACINQHLMNNKDCFFCKATIVSVEDWDKAANTSAMSSAA.

Position 2 is an N-acetylalanine (Ala2). The B30.2/SPRY domain maps to 74–254; that stretch reads VDSEDNESQG…VAFNFGSRPL (181 aa). A disordered region spans residues 460 to 483; that stretch reads HRSSRESRDGKEAREETTEERQRR. The span at 462–483 shows a compositional bias: basic and acidic residues; sequence SSRESRDGKEAREETTEERQRR. A Phosphoserine modification is found at Ser675. At Arg683 the chain carries Asymmetric dimethylarginine. The tract at residues 968-974 is interaction with NFKB1; it reads WILVRLW. Positions 1254, 1257, 1269, 1271, 1274, 1277, 1288, and 1291 each coordinate Zn(2+). Residues 1254 to 1292 form an RING-type zinc finger; sequence CPICYAHPISAVFQPCGHKSCKACINQHLMNNKDCFFCK.

As to quaternary structure, component of the KPC complex composed of RNF123/KPC1 and UBAC1/KPC2. Interacts with UBAC1 and CDKN1B via its N-terminal domain. Interacts with RIGI (via N-terminus) and IFIH1 (via N-terminus). In terms of processing, ubiquitinated, leading to its degradation. Deubiquitinated by USP19, thereby stimulating CDKN1B ubiquitin-dependent degradation.

Its subcellular location is the cytoplasm. The enzyme catalyses S-ubiquitinyl-[E2 ubiquitin-conjugating enzyme]-L-cysteine + [acceptor protein]-L-lysine = [E2 ubiquitin-conjugating enzyme]-L-cysteine + N(6)-ubiquitinyl-[acceptor protein]-L-lysine.. Its pathway is protein modification; protein ubiquitination. Catalytic subunit of the KPC complex that acts as E3 ubiquitin-protein ligase. Promotes the ubiquitination and proteasome-mediated degradation of CDKN1B which is the cyclin-dependent kinase inhibitor at the G0-G1 transition of the cell cycle. Also acts as a key regulator of the NF-kappa-B signaling by promoting maturation of the NFKB1 component of NF-kappa-B: acts by catalyzing ubiquitination of the NFKB1 p105 precursor, leading to limited proteasomal degradation of NFKB1 p105 and generation of the active NFKB1 p50 subunit. Functions also as an inhibitor of innate antiviral signaling mediated by RIGI and IFIH1 independently of its E3 ligase activity. Interacts with the N-terminal CARD domains of RIGI and IFIH1 and competes with the downstream adapter MAVS. The polypeptide is E3 ubiquitin-protein ligase RNF123 (Rnf123) (Mus musculus (Mouse)).